Here is a 245-residue protein sequence, read N- to C-terminus: Probable proteasome subunit alpha type-2 (245 aa).

Belongs to the peptidase T1A family. As to quaternary structure, the 26S proteasome consists of a 20S proteasome core and two 19S regulatory subunits. The 20S proteasome core is composed of 28 subunits that are arranged in four stacked rings, resulting in a barrel-shaped structure. The two end rings are each formed by seven alpha subunits, and the two central rings are each formed by seven beta subunits. The catalytic chamber with the active sites is on the inside of the barrel.

The protein localises to the cytoplasm. It localises to the nucleus. Functionally, the proteasome is a multicatalytic proteinase complex which is characterized by its ability to cleave peptides with Arg, Phe, Tyr, Leu, and Glu adjacent to the leaving group at neutral or slightly basic pH. The proteasome has an ATP-dependent proteolytic activity. This chain is Probable proteasome subunit alpha type-2 (pre8), found in Schizosaccharomyces pombe (strain 972 / ATCC 24843) (Fission yeast).